The sequence spans 440 residues: Xylose isomerase (440 aa).

Catalysis depends on residues His100 and Asp103. 7 residues coordinate Mg(2+): Glu231, Glu267, His270, Asp295, Asp306, Asp308, and Asp338.

The protein belongs to the xylose isomerase family. As to quaternary structure, homotetramer. Requires Mg(2+) as cofactor.

The protein localises to the cytoplasm. The enzyme catalyses alpha-D-xylose = alpha-D-xylulofuranose. The protein is Xylose isomerase of Burkholderia ambifaria (strain MC40-6).